The following is a 503-amino-acid chain: Angiopoietin-4 (503 aa).

The first 24 residues, 1-24 (MLSQLAMLQGSLLLVVATMSVAQQ), serve as a signal peptide directing secretion. A coiled-coil region spans residues 84–238 (TQQVKQLEQA…RQSAALTNIE (155 aa)). N-linked (GlcNAc...) asparagine glycans are attached at residues asparagine 96, asparagine 126, asparagine 140, asparagine 158, asparagine 247, asparagine 274, asparagine 311, asparagine 337, and asparagine 427. The 221-residue stretch at 282-502 (MAGEQVFQDC…ASRMMIRPLD (221 aa)) folds into the Fibrinogen C-terminal domain. Cysteine 291 and cysteine 320 form a disulfide bridge. A disulfide bridge connects residues cysteine 444 and cysteine 457.

Homodimer; disulfide-linked. Interacts with TEK/TIE2. In terms of tissue distribution, highly expressed in the lung with much lower levels found in other tissues.

It is found in the secreted. Its function is as follows. Binds to TEK/TIE2, modulating ANGPT1 signaling. Can induce tyrosine phosphorylation of TEK/TIE2. Promotes endothelial cell survival, migration and angiogenesis. This chain is Angiopoietin-4 (ANGPT4), found in Homo sapiens (Human).